The following is a 360-amino-acid chain: MTTIQQQRSSLLKGWPQFCEWVTSTNNRIYVGWFGVLMIPCLLAATTCFIVAFIAAPPVDIDGIREPVAGSFMYGNNIISGAVVPSSNAIGLHFYPIWEAATLDEWLYNGGPYQLVIFHFLIGISAYMGRQWELSYRLGMRPWICVAYSAPVSAAFAVFLVYPFGQGSFSDGMPLGISGTFNFMFVFQAEHNILMHPFHMAGVAGMFGGALFSAMHGSLVTSSLIRETTGLDSQNYGYKFGQEEETYNIVAAHGYFGRLIFQYASFNNSRSLHFFLASWPVICVWLTSMGICTMAFNLNGFNFNQSVVDTSGKVVPTWGDVLNRANLGMEVMHERNAHNFPLDLAAAESTSVALVAPAIG.

The next 3 membrane-spanning stretches (helical) occupy residues tyrosine 30 to threonine 47, histidine 119 to leucine 134, and tryptophan 143 to alanine 157. Histidine 119 is a chlorophyll a binding site. Tyrosine 127 serves as a coordination point for pheophytin a. Residues aspartate 171 and glutamate 190 each contribute to the [CaMn4O5] cluster site. Residues phenylalanine 198–leucine 219 traverse the membrane as a helical segment. Histidine 199 provides a ligand contact to chlorophyll a. A quinone-binding positions include histidine 216 and serine 265 to phenylalanine 266. Histidine 216 contacts Fe cation. Histidine 273 lines the Fe cation pocket. A helical transmembrane segment spans residues phenylalanine 275–methionine 289. [CaMn4O5] cluster-binding residues include histidine 333, glutamate 334, aspartate 343, and alanine 345. Positions alanine 346–glycine 360 are excised as a propeptide.

Belongs to the reaction center PufL/M/PsbA/D family. In terms of assembly, PSII is composed of 1 copy each of membrane proteins PsbA, PsbB, PsbC, PsbD, PsbE, PsbF, PsbH, PsbI, PsbJ, PsbK, PsbL, PsbM, PsbT, PsbX, PsbY, Psb30/Ycf12, peripheral proteins PsbO, CyanoQ (PsbQ), PsbU, PsbV and a large number of cofactors. It forms dimeric complexes. It depends on The D1/D2 heterodimer binds P680, chlorophylls that are the primary electron donor of PSII, and subsequent electron acceptors. It shares a non-heme iron and each subunit binds pheophytin, quinone, additional chlorophylls, carotenoids and lipids. D1 provides most of the ligands for the Mn4-Ca-O5 cluster of the oxygen-evolving complex (OEC). There is also a Cl(-1) ion associated with D1 and D2, which is required for oxygen evolution. The PSII complex binds additional chlorophylls, carotenoids and specific lipids. as a cofactor. Tyr-162 forms a radical intermediate that is referred to as redox-active TyrZ, YZ or Y-Z. Post-translationally, C-terminally processed by CtpA; processing is essential to allow assembly of the oxygen-evolving complex and thus photosynthetic growth.

The protein resides in the cellular thylakoid membrane. The enzyme catalyses 2 a plastoquinone + 4 hnu + 2 H2O = 2 a plastoquinol + O2. Functionally, photosystem II (PSII) is a light-driven water:plastoquinone oxidoreductase that uses light energy to abstract electrons from H(2)O, generating O(2) and a proton gradient subsequently used for ATP formation. It consists of a core antenna complex that captures photons, and an electron transfer chain that converts photonic excitation into a charge separation. The D1/D2 (PsbA/PsbD) reaction center heterodimer binds P680, the primary electron donor of PSII as well as several subsequent electron acceptors. The protein is Photosystem II protein D1 of Prochlorococcus marinus (strain NATL1A).